We begin with the raw amino-acid sequence, 217 residues long: Lipoprotein CseA (217 aa).

An N-terminal signal peptide occupies residues 1-34 (MRGLGTESLRARGALKAAIAAVAGLAVLGLSVSA). The N-palmitoyl cysteine moiety is linked to residue Cys-35. A lipid anchor (S-diacylglycerol cysteine) is attached at Cys-35. Disordered stretches follow at residues 39 to 66 (GTGARDEGPAGSDSVAAGAATPTVSPSK) and 192 to 217 (FSEESRTHTEYSNAVGGTDSATPAPN).

Its subcellular location is the cell membrane. In terms of biological role, may be involved in the stabilization of the cell envelope or may interact with the sensor protein CseC to modulate its activity, in response to cell envelope stress. In Streptomyces avermitilis (strain ATCC 31267 / DSM 46492 / JCM 5070 / NBRC 14893 / NCIMB 12804 / NRRL 8165 / MA-4680), this protein is Lipoprotein CseA (cseA).